The following is a 1062-amino-acid chain: MAGKARVHELAKELGVDSKTVLAKLKDLGEFVKSASSTVEAPVVRKLKEAFPADGAPTSPGRATSRPGPPGGGARPTPPSRPGLAPRPGPRPVPGRPGPLGRPGPATPAPSPSPASPPLPASPVQASPVQASPVQASPTSAPAAPRPAAASAVPAPPMPSVPSAPSGPRPGPNAPRPGAPQGGGRPRPGTPVPPSGPTAGGPTAGGPTAGGPTAGGPRPGPRPGPRSAAPGNNPYTTPSAGPRPSAGPRPSAGQSGPPSTPTPRPSAPRSGTPRPGTPRPGGPRPGGTGAGGPRPTPGGMPPRPGGPRSGAGGGMPPRPGGTGGPRPNANMFQPRPAGGPPGRPGGGGAPGRPGGGGAPGRPGGGGGPRPGGFAGRGGAPGRPGGGGGGGGAPGRPGGGGGGGGAPGRPAAGGRGRGGTTAGAFGPGGRGRPGRQRKSKRAKRQEWESGLEAPRMGAMVPRGNGQAIRLPRGASLADFADKIDANPGALVQVVFTQLGEMVTATQSCTDETLQLLGVTLGYEVQIVSPEDEDKELLESFDLSFGGEYGDDVELSSRPPVVTVMGHVDHGKTKLLDAIRSTDVVGGEAGGITQHIGAYQVRAKVDGDERPITFIDTPGHETFTAMRARGAQVTDIVVLVVAADDGVKPQTIEALNHAQAAGVPVVVAVNKVDKEGADPAKVRGQLTEYGLVAEEYGGDTMFVDVSARNRTNIDGLLEAIVLTADASLDLRAPTEVEAQGVAIEGRLDRGRGPVATVLVQRGTLRVGDSVVAGEAFGRVRAMLDEHGGQVVEAGPARPVQVLGFTSVPDAGDNFLVVPEDRVARQIAERRQARERNAELALSRGRPTLETILERMKEGEKTQLNLILKGDVSGSVEALEDALLKIDVGDEVGLRIIDRGVGAITETNVMLASASDAIIIGFNVRPQGKATELADREGVEVRYYSVIYQAIEDIENALKGMLKPVYEEAQLGTAEVREVFRVPRIGNVAGSLVRSGVIRRNTKARLIRDGVVVADNLTVESLKRFKDDATEVREGYECGIGLGSFNDIKIDDVIETFEQREVPRA.

Residues 34–463 (SASSTVEAPV…RMGAMVPRGN (430 aa)) form a disordered region. Residues 76–121 (PTPPSRPGLAPRPGPRPVPGRPGPLGRPGPATPAPSPSPASPPLPA) show a composition bias toward pro residues. Low complexity predominate over residues 122-153 (SPVQASPVQASPVQASPTSAPAAPRPAAASAV). Over residues 154–178 (PAPPMPSVPSAPSGPRPGPNAPRPG) the composition is skewed to pro residues. The segment covering 198-214 (TAGGPTAGGPTAGGPTA) has biased composition (gly residues). Residues 294 to 305 (RPTPGGMPPRPG) are compositionally biased toward pro residues. Composition is skewed to gly residues over residues 307–324 (PRSG…GTGG) and 344–430 (PGGG…GGRG). Basic residues predominate over residues 431–442 (RPGRQRKSKRAK). In terms of domain architecture, tr-type G spans 555-727 (SRPPVVTVMG…IVLTADASLD (173 aa)). Positions 564–571 (GHVDHGKT) are G1. 564–571 (GHVDHGKT) lines the GTP pocket. The segment at 589–593 (GITQH) is G2. The segment at 614 to 617 (DTPG) is G3. Residues 614–618 (DTPGH) and 668–671 (NKVD) contribute to the GTP site. The tract at residues 668-671 (NKVD) is G4. Residues 704 to 706 (SAR) form a G5 region.

This sequence belongs to the TRAFAC class translation factor GTPase superfamily. Classic translation factor GTPase family. IF-2 subfamily.

It localises to the cytoplasm. One of the essential components for the initiation of protein synthesis. Protects formylmethionyl-tRNA from spontaneous hydrolysis and promotes its binding to the 30S ribosomal subunits. Also involved in the hydrolysis of GTP during the formation of the 70S ribosomal complex. The polypeptide is Translation initiation factor IF-2 (Frankia casuarinae (strain DSM 45818 / CECT 9043 / HFP020203 / CcI3)).